Here is a 541-residue protein sequence, read N- to C-terminus: MAKIIAYEEDARQGMLAGLDRLANTVKVTLGPKGRNVVLDKSYGAPTITNDGVSIAKEIDLEDPYERIGAELVKEVAKKTDDVAGDGTTTATVLAQSLVHEGLKNVVAGSNPIALRRGIEKASEAIVKELLASAKDVETKDQIAATATISAADPEVGEKIAEALDKVGQDGVVTVEDNNKFGLDLDFTEGMRFDKGYISPYFVTNAEDQTAVLEDPYILLTSGKVSSQQDIVHVAELVMKSGKPLLIIAEDVDGEALPTLVLNKIRGTFNTVAVKAPGFGDRRKAMLQDMAILTGAQVVSDDLGLKLDSIDASVFGHAAKVIVSKDETTIVSGAGSKEDVEARVAQIRAEIENTDSDYDREKLQERLAKLAGGVAVIKVGAATEVEAKERKHRIEDAVRNAKAAIEEGLLPGGGVALVQAAAKVEKSADIVALSGEEATGAAIVFRAVEAPIKQIAQNSGVSGDVVLNKVRELPEGEGFNAATNTYEDLLAAGVTDPVKVTRSALQNAASIAGLFLTTEAVVANKPEKPAAAPQAGAEMGY.

Residues 29 to 32 (TLGP), 86 to 90 (DGTTT), G413, 480 to 482 (NAA), and D496 contribute to the ATP site.

This sequence belongs to the chaperonin (HSP60) family. As to quaternary structure, forms a cylinder of 14 subunits composed of two heptameric rings stacked back-to-back. Interacts with the co-chaperonin GroES.

The protein localises to the cytoplasm. It carries out the reaction ATP + H2O + a folded polypeptide = ADP + phosphate + an unfolded polypeptide.. Together with its co-chaperonin GroES, plays an essential role in assisting protein folding. The GroEL-GroES system forms a nano-cage that allows encapsulation of the non-native substrate proteins and provides a physical environment optimized to promote and accelerate protein folding. In Gardnerella vaginalis, this protein is Chaperonin GroEL.